The sequence spans 671 residues: Vinexin (671 aa).

At Gln2 the chain carries N-acetylalanine. Position 6 is a phosphoserine (Arg6). Disordered stretches follow at residues 46–111 (LNFQ…TKDS), 166–215 (TFEE…RPGA), 249–268 (LETG…EKPS), 295–324 (TRLP…AWSS), and 337–383 (SLSP…KKRK). Over residues 88–108 (PSASTKIPASQHTQNWSATWT) the composition is skewed to polar residues. One can recognise a SoHo domain in the interval 115–187 (DKRWVKYEGI…GAQQRPAHRP (73 aa)). Phosphoserine is present on Ser348. The span at 359 to 368 (PSSTRDPSAS) shows a compositional bias: polar residues. 2 consecutive SH3 domains span residues 380–439 (KKRK…VLPA) and 454–515 (LEYG…VSRE). Residues 380 to 515 (KKRKAARLKF…PASYVQVSRE (136 aa)) are binds to vinculin. Residue Ser395 is modified to Phosphoserine. Residues 519-611 (RLCDDGPQLP…LGTSSPNTSQ (93 aa)) form a disordered region. At Ser530 the chain carries Phosphoserine; by MAPK1. Residues 535 to 553 (AAARSARHPSSPSALRSPA) are compositionally biased toward low complexity. Phosphoserine is present on residues Ser544, Ser545, Ser547, Ser551, and Ser563. Positions 560–584 (GQTSPRRTGFSFPTQEPRPQTQNLG) are enriched in polar residues. Residues 612–671 (IHWTPYRAMYQYRPQNEDELELREGDRVDVMQQCDDGWFVGVSRRTQKFGTFPGNYVAPV) enclose the SH3 3 domain. Residues 612–671 (IHWTPYRAMYQYRPQNEDELELREGDRVDVMQQCDDGWFVGVSRRTQKFGTFPGNYVAPV) are binds to SOS.

In terms of assembly, interacts with DLG5 through its third SH3 domain. Interacts with vinculin by the first two SH3 domains and the proline rich region of vinculin. Binds to SOS (guanine nucleotide exchange factor of RAS and RAC), through its third SH3 domain. The formation of this complex is down-regulated by phosphorylation of SOS. Interacts with INPPL1/SHIP2, SAFB2, SOCS7 and SRCIN1. Interacts with FASLG. Interacts with MAPK1/ERK2. Post-translationally, phosphorylated at Ser-530 by MAPK1/ERK2 during cell spreading. In terms of tissue distribution, both isoforms are expressed in different tissues like heart, placenta, brain, skeletal muscle and pancreas. Isoform beta is especially found in liver.

The protein localises to the cell junction. The protein resides in the cytoplasm. It is found in the cytoskeleton. Its subcellular location is the nucleus. Vinexin alpha isoform promotes up-regulation of actin stress fiber formation. Vinexin beta isoform plays a role in cell spreading and enhances the activation of JNK/SAPK in response to EGF stimulation by using its third SH3 domain. In Homo sapiens (Human), this protein is Vinexin (SORBS3).